The sequence spans 392 residues: Tryptophan synthase beta chain (392 aa).

An N6-(pyridoxal phosphate)lysine modification is found at Lys-84.

This sequence belongs to the TrpB family. As to quaternary structure, tetramer of two alpha and two beta chains. The cofactor is pyridoxal 5'-phosphate.

The enzyme catalyses (1S,2R)-1-C-(indol-3-yl)glycerol 3-phosphate + L-serine = D-glyceraldehyde 3-phosphate + L-tryptophan + H2O. It participates in amino-acid biosynthesis; L-tryptophan biosynthesis; L-tryptophan from chorismate: step 5/5. Functionally, the beta subunit is responsible for the synthesis of L-tryptophan from indole and L-serine. The protein is Tryptophan synthase beta chain (trpB) of Chlamydia trachomatis serovar D (strain ATCC VR-885 / DSM 19411 / UW-3/Cx).